The primary structure comprises 199 residues: Superoxide dismutase [Fe] (199 aa).

Residues His28, His80, Asp162, and His166 each contribute to the Fe cation site.

The protein belongs to the iron/manganese superoxide dismutase family. In terms of assembly, homodimer. Fe cation serves as cofactor.

It is found in the cytoplasm. It carries out the reaction 2 superoxide + 2 H(+) = H2O2 + O2. Its function is as follows. Destroys superoxide anion radicals which are normally produced within the cells and which are toxic to biological systems. This is Superoxide dismutase [Fe] (sodB) from Leptolyngbya boryana (Plectonema boryanum).